The sequence spans 512 residues: DNA-binding protein (512 aa).

The interval 1–105 is disordered; it reads MAGRGGSQLE…QDSEDEREAE (105 aa). Over residues 9 to 21 the composition is skewed to basic and acidic residues; sequence LERRRERTPDRGR. Pro residues predominate over residues 69–78; it reads QEQPPPPQQP. The segment covering 79 to 88 has biased composition (basic residues); the sequence is PKKKPRKTKH. Over residues 96-105 the composition is skewed to acidic residues; the sequence is QDSEDEREAE. Y174 is modified (phosphotyrosine; by host). Positions 263 and 265 each coordinate Zn(2+). A flexible loop region spans residues 276 to 310; that stretch reads IEMDVASENGQRALKENPDRAKVTQNRWGRSVVQL. Zn(2+) is bound by residues C318, C334, C376, C378, C430, and C447. The tract at residues 495-512 is C-terminal arm, DBP binding; the sequence is VSLPAGHAETSRQNPFDF.

The protein belongs to the adenoviridae E2A DNA-binding protein family. As to quaternary structure, homomultimerizes on viral ssDNA bound to pTP. Forms a initiation complex with viral polymerase, pTP and hosts NFIA and POU2F1/OCT1. Interacts with host SRCAP.

Its subcellular location is the host nucleus. Plays a role in the elongation phase of viral strand displacement replication by unwinding the template in an ATP-independent fashion, employing its capacity to form multimers. Also enhances the rate of initiation. Released from template upon second strand synthesis. Assembles in complex with viral pTP, viral pol, host NFIA and host POU2F1/OCT1 on viral origin of replication. Covers the whole ssDNA genome during synthesis. The complementary strand synthesis induces its relese from DNA template. May inhibit cellular transcription mediated by the interaction between host SRCAP and CBP. The protein is DNA-binding protein of Homo sapiens (Human).